We begin with the raw amino-acid sequence, 304 residues long: Glutaminase (304 aa).

Substrate-binding residues include serine 63, asparagine 114, glutamate 158, asparagine 165, tyrosine 189, tyrosine 240, and valine 258.

This sequence belongs to the glutaminase family. As to quaternary structure, homotetramer.

The catalysed reaction is L-glutamine + H2O = L-glutamate + NH4(+). This Shewanella amazonensis (strain ATCC BAA-1098 / SB2B) protein is Glutaminase.